A 307-amino-acid polypeptide reads, in one-letter code: Acetaldehyde dehydrogenase (307 aa).

12–15 contributes to the NAD(+) binding site; that stretch reads SGNI. Catalysis depends on cysteine 127, which acts as the Acyl-thioester intermediate. NAD(+)-binding positions include 158–166 and asparagine 278; that span reads SAGPGTRQN.

This sequence belongs to the acetaldehyde dehydrogenase family. As to quaternary structure, monomer. Can also form a heterotetramer composed of two aldolase (TTHB246) and two dehydrogenase (TTHB247) subunits. Upon complex formation, the aldolase shows a 5-fold increase in substrate affinity, while the dehydrogenase shows a 3-fold decrease; the kcat values of each enzyme are reduced by 2-fold when they are in a complex.

The catalysed reaction is acetaldehyde + NAD(+) + CoA = acetyl-CoA + NADH + H(+). It catalyses the reaction propanal + NAD(+) + CoA = propanoyl-CoA + NADH + H(+). In terms of biological role, catalyzes the conversion of acetaldehyde or propanal to acetyl-CoA or propanoyl-CoA, respectively, using NAD(+) and coenzyme A. The aldehyde substrates can be directly channeled from the aldolase TTHB246 to the dehydrogenase TTHB247. Is the final enzyme in the meta-cleavage pathway for the degradation of aromatic compounds. This Thermus thermophilus (strain ATCC 27634 / DSM 579 / HB8) protein is Acetaldehyde dehydrogenase.